Reading from the N-terminus, the 361-residue chain is Protein C42 (361 aa).

Positions 32 to 36 (LLCDE) are LXCXE motif. The Nuclear localization signal motif lies at 357–360 (KRKK).

The protein belongs to the baculoviridae C42 protein family. Forms a complex with proteins E27 and p78/83. The interaction with p78/83 mediates nuclear translocation of P78/83. Interacts with protein Ac102. Interacts with IE0.

It is found in the host nucleus. Its subcellular location is the virion. Functionally, plays a role in host nuclear actin polymerization by recruiting p78/73 protein that is capable of activating an actin-related protein 2/3 complex to initiate nuclear actin polymerization. This chain is Protein C42, found in Lepidoptera (butterflies and moths).